We begin with the raw amino-acid sequence, 145 residues long: Protein SprT-like (145 aa).

In terms of domain architecture, SprT-like spans 4 to 140; sequence TNYVQEVSLA…VCGNCHGKLI (137 aa). Position 64 (His-64) interacts with Zn(2+). Residue Glu-65 is part of the active site. Residue His-68 coordinates Zn(2+).

It belongs to the SprT family. Zn(2+) serves as cofactor.

It localises to the cytoplasm. This is Protein SprT-like from Streptococcus pyogenes serotype M18 (strain MGAS8232).